The sequence spans 300 residues: Jacalin-related lectin 32 (300 aa).

N-acetylalanine is present on alanine 2. Jacalin-type lectin domains are found at residues 2 to 146 (AQKV…YFTT) and 154 to 297 (AKKL…HILP).

Belongs to the jacalin lectin family.

In terms of biological role, involved in gametophytic development. The protein is Jacalin-related lectin 32 (JAL32) of Arabidopsis thaliana (Mouse-ear cress).